A 340-amino-acid chain; its full sequence is Glutamine synthetase (340 aa).

The GS beta-grasp domain maps to 3–82 (IKAEYIWIDG…LCEVLHTDLT (80 aa)). The GS catalytic domain maps to 88–340 (TRALLRPVAE…CTELARREQI (253 aa)). The Mg(2+) site is built by glutamate 109, glutamate 111, glutamate 171, and glutamate 178. Residue glutamate 276 coordinates L-glutamate.

Belongs to the glutamine synthetase family. Homooctamer and homotetramer. Requires Mg(2+) as cofactor.

It is found in the cytoplasm. The enzyme catalyses L-glutamate + NH4(+) + ATP = L-glutamine + ADP + phosphate + H(+). In terms of biological role, catalyzes the ATP-dependent biosynthesis of glutamine from glutamate and ammonia. This Streptomyces hygroscopicus protein is Glutamine synthetase.